Consider the following 999-residue polypeptide: Tyrosine-protein kinase Mer (999 aa).

The signal sequence occupies residues 1-20 (MGPAPLPLLLGLFLPALWRR). Topologically, residues 21–505 (AITEAREEAK…PGNADPVLII (485 aa)) are extracellular. Ig-like C2-type domains are found at residues 81-186 (PQVT…EIVS) and 197-273 (PHFT…LTVS). N-linked (GlcNAc...) asparagine glycosylation is found at N114, N170, N207, N215, N234, N294, N316, N329, N336, N354, N389, N395, N442, and N454. An intrachain disulfide couples C115 to C175. C218 and C262 are joined by a disulfide. 2 consecutive Fibronectin type-III domains span residues 286 to 381 (PPTE…TTEG) and 386 to 484 (APLN…PAHG). A helical membrane pass occupies residues 506 to 526 (FGCFCGFILIGLILYISLAIR). The Cytoplasmic portion of the chain corresponds to 527-999 (KRVQETKFGN…DSSEGSEVLM (473 aa)). Position 543 is a phosphoserine (S543). One can recognise a Protein kinase domain in the interval 587-858 (LILGKILGEG…VLRLQLEKLL (272 aa)). ATP is bound by residues 593–601 (LGEGEFGSV) and K615. D723 serves as the catalytic Proton acceptor. A phosphotyrosine; by autocatalysis mark is found at Y749, Y753, Y754, and Y872. Residue S935 is modified to Phosphoserine.

The protein belongs to the protein kinase superfamily. Tyr protein kinase family. AXL/UFO subfamily. As to quaternary structure, interacts (upon activation) with TNK2; stimulates TNK2 autophosphorylation. Interacts (via N-terminus) with extracellular ligands LGALS3, TUB, TULP1 and GAS6. Interacts with VAV1 in a phosphotyrosine-independent manner. Interacts with TIMD4; this interaction enhances TIMD4-mediated efferocytosis. In terms of processing, autophosphorylated on Tyr-749, Tyr-753 and Tyr-754 in the activation loop allowing full activity. Autophosphorylated on Tyr-872 leading to recruitment of downstream partners of the signaling cascade such as PLCG2. As to expression, not expressed in normal B- and T-lymphocytes but is expressed in numerous neoplastic B- and T-cell lines. Highly expressed in testis, ovary, prostate, lung, and kidney, with lower expression in spleen, small intestine, colon, and liver.

Its subcellular location is the cell membrane. The enzyme catalyses L-tyrosyl-[protein] + ATP = O-phospho-L-tyrosyl-[protein] + ADP + H(+). In terms of biological role, receptor tyrosine kinase that transduces signals from the extracellular matrix into the cytoplasm by binding to several ligands including LGALS3, TUB, TULP1 or GAS6. Regulates many physiological processes including cell survival, migration, differentiation, and phagocytosis of apoptotic cells (efferocytosis). Ligand binding at the cell surface induces autophosphorylation of MERTK on its intracellular domain that provides docking sites for downstream signaling molecules. Following activation by ligand, interacts with GRB2 or PLCG2 and induces phosphorylation of MAPK1, MAPK2, FAK/PTK2 or RAC1. MERTK signaling plays a role in various processes such as macrophage clearance of apoptotic cells, platelet aggregation, cytoskeleton reorganization and engulfment. Functions in the retinal pigment epithelium (RPE) as a regulator of rod outer segments fragments phagocytosis. Also plays an important role in inhibition of Toll-like receptors (TLRs)-mediated innate immune response by activating STAT1, which selectively induces production of suppressors of cytokine signaling SOCS1 and SOCS3. The protein is Tyrosine-protein kinase Mer (MERTK) of Homo sapiens (Human).